Reading from the N-terminus, the 307-residue chain is Ribosomal RNA small subunit methyltransferase H (307 aa).

S-adenosyl-L-methionine is bound by residues 31 to 33 (GGH), aspartate 51, tyrosine 83, aspartate 97, and glutamine 104.

The protein belongs to the methyltransferase superfamily. RsmH family.

It is found in the cytoplasm. The enzyme catalyses cytidine(1402) in 16S rRNA + S-adenosyl-L-methionine = N(4)-methylcytidine(1402) in 16S rRNA + S-adenosyl-L-homocysteine + H(+). Its function is as follows. Specifically methylates the N4 position of cytidine in position 1402 (C1402) of 16S rRNA. This chain is Ribosomal RNA small subunit methyltransferase H, found in Buchnera aphidicola subsp. Cinara cedri (strain Cc).